Reading from the N-terminus, the 119-residue chain is Large ribosomal subunit protein bL20 (119 aa).

This sequence belongs to the bacterial ribosomal protein bL20 family.

Functionally, binds directly to 23S ribosomal RNA and is necessary for the in vitro assembly process of the 50S ribosomal subunit. It is not involved in the protein synthesizing functions of that subunit. This Xylella fastidiosa (strain M23) protein is Large ribosomal subunit protein bL20.